A 273-amino-acid polypeptide reads, in one-letter code: 4-hydroxy-tetrahydrodipicolinate reductase (273 aa).

NAD(+)-binding positions include 12–17 (GAGGRM) and E38. Residue R39 participates in NADP(+) binding. NAD(+)-binding positions include 102–104 (GTT) and 126–129 (AANF). Catalysis depends on H159, which acts as the Proton donor/acceptor. H160 contributes to the (S)-2,3,4,5-tetrahydrodipicolinate binding site. Residue K163 is the Proton donor of the active site. (S)-2,3,4,5-tetrahydrodipicolinate is bound at residue 169 to 170 (GT).

This sequence belongs to the DapB family. In terms of assembly, homotetramer.

Its subcellular location is the cytoplasm. The enzyme catalyses (S)-2,3,4,5-tetrahydrodipicolinate + NAD(+) + H2O = (2S,4S)-4-hydroxy-2,3,4,5-tetrahydrodipicolinate + NADH + H(+). It carries out the reaction (S)-2,3,4,5-tetrahydrodipicolinate + NADP(+) + H2O = (2S,4S)-4-hydroxy-2,3,4,5-tetrahydrodipicolinate + NADPH + H(+). The protein operates within amino-acid biosynthesis; L-lysine biosynthesis via DAP pathway; (S)-tetrahydrodipicolinate from L-aspartate: step 4/4. Functionally, catalyzes the conversion of 4-hydroxy-tetrahydrodipicolinate (HTPA) to tetrahydrodipicolinate. This Salmonella paratyphi A (strain ATCC 9150 / SARB42) protein is 4-hydroxy-tetrahydrodipicolinate reductase.